The sequence spans 359 residues: Peptide chain release factor 1 (359 aa).

Q235 carries the post-translational modification N5-methylglutamine. Residues Q283 to Y309 form a disordered region.

This sequence belongs to the prokaryotic/mitochondrial release factor family. In terms of processing, methylated by PrmC. Methylation increases the termination efficiency of RF1.

The protein resides in the cytoplasm. In terms of biological role, peptide chain release factor 1 directs the termination of translation in response to the peptide chain termination codons UAG and UAA. The sequence is that of Peptide chain release factor 1 from Brucella suis (strain ATCC 23445 / NCTC 10510).